We begin with the raw amino-acid sequence, 184 residues long: Interferon alpha-1 (184 aa).

A signal peptide spans 1-23 (MALPVSLLMALVVLSCHSICSLG). 2 disulfide bridges follow: Cys24–Cys122 and Cys52–Cys162.

The protein belongs to the alpha/beta interferon family. As to quaternary structure, interacts with CR2.

The protein resides in the secreted. Produced by macrophages, IFN-alpha have antiviral activities. Interferon stimulates the production of two enzymes: a protein kinase and an oligoadenylate synthetase. This is Interferon alpha-1 from Equus caballus (Horse).